Reading from the N-terminus, the 644-residue chain is Exoribonuclease 2 (644 aa).

Positions 189–516 (REDLTALDFV…NHRLLKAVIK (328 aa)) constitute an RNB domain. The S1 motif domain maps to 561-643 (DTRFAAEIVD…ETRSIIARPV (83 aa)).

Belongs to the RNR ribonuclease family. RNase II subfamily.

Its subcellular location is the cytoplasm. It carries out the reaction Exonucleolytic cleavage in the 3'- to 5'-direction to yield nucleoside 5'-phosphates.. In terms of biological role, involved in mRNA degradation. Hydrolyzes single-stranded polyribonucleotides processively in the 3' to 5' direction. This is Exoribonuclease 2 from Escherichia coli O127:H6 (strain E2348/69 / EPEC).